The sequence spans 695 residues: tRNA wybutosine-synthesizing protein 4 (695 aa).

Residues K38, R88, G115, 146–147 (DY), 196–197 (DL), and E224 each bind S-adenosyl-L-methionine. The active-site Proton donor; for both methylation and methoxycarbonylation activities is the R88. The active-site Proton acceptor; for methoxycarbonylation activity is the Y229.

The protein belongs to the methyltransferase superfamily. LCMT family.

It localises to the cytoplasm. It is found in the mitochondrion. It carries out the reaction 7-[(3S)-3-amino-3-carboxypropyl]wyosine(37) in tRNA(Phe) + S-adenosyl-L-methionine = 7-[(3S)-(3-amino-3-methoxycarbonyl)propyl]wyosine(37) in tRNA(Phe) + S-adenosyl-L-homocysteine. The catalysed reaction is 7-[(3S)-(3-amino-3-methoxycarbonyl)propyl]wyosine(37) in tRNA(Phe) + S-adenosyl-L-methionine + CO2 = wybutosine(37) in tRNA(Phe) + S-adenosyl-L-homocysteine + 2 H(+). The protein operates within tRNA modification; wybutosine-tRNA(Phe) biosynthesis. Functionally, S-adenosyl-L-methionine-dependent methyltransferase that acts as a component of the wybutosine biosynthesis pathway. Wybutosine is a hyper modified guanosine with a tricyclic base found at the 3'-position adjacent to the anticodon of eukaryotic phenylalanine tRNA. Catalyzes the final 2 independent reactions, methylation of the alpha-carboxy group of wybutosine-72 to form wybutosine-58, and methoxycarbonylation of alpha-amino group of wybutosine-58 through the fixation of CO(2) to complete wybutosine. In Saccharomyces cerevisiae (strain ATCC 204508 / S288c) (Baker's yeast), this protein is tRNA wybutosine-synthesizing protein 4 (PPM2).